A 474-amino-acid polypeptide reads, in one-letter code: Vasculin-like protein 1 (474 aa).

The tract at residues 17-42 (QSAKSPTATFEKHGEHLPRGEGRFGV) is disordered. Basic and acidic residues predominate over residues 26–38 (FEKHGEHLPRGEG). Ser-49 and Ser-76 each carry phosphoserine. Residues 91–191 (GNPSGWHSSS…VWENPPSAKQ (101 aa)) form a disordered region. Positions 116 to 128 (NHRHWNGSFHSRK) are enriched in basic residues. The span at 136 to 154 (PPMEIREEKKEDKVEKLQF) shows a compositional bias: basic and acidic residues. The residue at position 202 (Ser-202) is a Phosphoserine. Positions 238 to 371 (LVPKPVPPPS…EEGCHQNGLA (134 aa)) are disordered. Positions 262-277 (GSLSSSRESAFTSPIS) are enriched in polar residues. A compositionally biased stretch (low complexity) spans 291-312 (SSPKESPSSTTPPIEISSSRLT). Ser-292 carries the post-translational modification Phosphoserine. Position 301 is a phosphothreonine (Thr-301). Composition is skewed to basic and acidic residues over residues 317–346 (RTTD…CDKL) and 356–365 (EPKENGEEGC). The residue at position 382 (Ser-382) is a Phosphoserine. Positions 453–474 (AEFEDSDTETSSSETSDDDAWK) are disordered.

Belongs to the vasculin family.

It is found in the nucleus. Functionally, possible transcription factor. This chain is Vasculin-like protein 1 (GPBP1L1), found in Homo sapiens (Human).